The primary structure comprises 160 residues: Phosphopantetheine adenylyltransferase (160 aa).

Position 9 (Thr9) interacts with substrate. Residues 9-10 (TF) and His17 contribute to the ATP site. The substrate site is built by Lys41, Leu73, and Arg87. ATP-binding positions include 88 to 90 (GLR), Glu98, and 123 to 129 (LSYISST).

The protein belongs to the bacterial CoaD family. Homohexamer. It depends on Mg(2+) as a cofactor.

The protein localises to the cytoplasm. The catalysed reaction is (R)-4'-phosphopantetheine + ATP + H(+) = 3'-dephospho-CoA + diphosphate. It participates in cofactor biosynthesis; coenzyme A biosynthesis; CoA from (R)-pantothenate: step 4/5. Reversibly transfers an adenylyl group from ATP to 4'-phosphopantetheine, yielding dephospho-CoA (dPCoA) and pyrophosphate. The sequence is that of Phosphopantetheine adenylyltransferase from Marinobacter nauticus (strain ATCC 700491 / DSM 11845 / VT8) (Marinobacter aquaeolei).